The sequence spans 124 residues: Small ribosomal subunit protein uS12 (124 aa).

A disordered region spans residues 1–25; that stretch reads MPTINQLIRKPRKSQKEKTASPALQ. Aspartate 89 is subject to 3-methylthioaspartic acid.

The protein belongs to the universal ribosomal protein uS12 family. In terms of assembly, part of the 30S ribosomal subunit. Contacts proteins S8 and S17. May interact with IF1 in the 30S initiation complex.

Its function is as follows. With S4 and S5 plays an important role in translational accuracy. Functionally, interacts with and stabilizes bases of the 16S rRNA that are involved in tRNA selection in the A site and with the mRNA backbone. Located at the interface of the 30S and 50S subunits, it traverses the body of the 30S subunit contacting proteins on the other side and probably holding the rRNA structure together. The combined cluster of proteins S8, S12 and S17 appears to hold together the shoulder and platform of the 30S subunit. The chain is Small ribosomal subunit protein uS12 from Borrelia turicatae (strain 91E135).